Consider the following 907-residue polypeptide: Protein translocase subunit SecA (907 aa).

Residues Gln87, 105-109, and Asp512 contribute to the ATP site; that span reads GEGKT. Residues 862 to 885 form a disordered region; that stretch reads AENQLDDGHSSDQNHSPMVRDERK. Residues 867 to 885 show a composition bias toward basic and acidic residues; sequence DDGHSSDQNHSPMVRDERK. Zn(2+) contacts are provided by Cys892, Cys894, Cys903, and His904.

Belongs to the SecA family. In terms of assembly, monomer and homodimer. Part of the essential Sec protein translocation apparatus which comprises SecA, SecYEG and auxiliary proteins SecDF-YajC and YidC. Zn(2+) is required as a cofactor.

It localises to the cell inner membrane. It is found in the cytoplasm. It catalyses the reaction ATP + H2O + cellular proteinSide 1 = ADP + phosphate + cellular proteinSide 2.. Functionally, part of the Sec protein translocase complex. Interacts with the SecYEG preprotein conducting channel. Has a central role in coupling the hydrolysis of ATP to the transfer of proteins into and across the cell membrane, serving both as a receptor for the preprotein-SecB complex and as an ATP-driven molecular motor driving the stepwise translocation of polypeptide chains across the membrane. The polypeptide is Protein translocase subunit SecA (Aliivibrio salmonicida (strain LFI1238) (Vibrio salmonicida (strain LFI1238))).